Here is a 328-residue protein sequence, read N- to C-terminus: Ribosomal RNA small subunit methyltransferase H (328 aa).

Residues 37–39 (GGH), aspartate 57, phenylalanine 83, aspartate 104, and glutamine 111 contribute to the S-adenosyl-L-methionine site.

This sequence belongs to the methyltransferase superfamily. RsmH family.

The protein localises to the cytoplasm. It carries out the reaction cytidine(1402) in 16S rRNA + S-adenosyl-L-methionine = N(4)-methylcytidine(1402) in 16S rRNA + S-adenosyl-L-homocysteine + H(+). Its function is as follows. Specifically methylates the N4 position of cytidine in position 1402 (C1402) of 16S rRNA. This Neisseria meningitidis serogroup A / serotype 4A (strain DSM 15465 / Z2491) protein is Ribosomal RNA small subunit methyltransferase H.